A 55-amino-acid polypeptide reads, in one-letter code: Large ribosomal subunit protein bL33A (55 aa).

It belongs to the bacterial ribosomal protein bL33 family.

This chain is Large ribosomal subunit protein bL33A, found in Salinispora tropica (strain ATCC BAA-916 / DSM 44818 / JCM 13857 / NBRC 105044 / CNB-440).